The primary structure comprises 301 residues: N-acetylmuramic acid 6-phosphate etherase (301 aa).

Residues 57 to 220 (IAEAFRQGGR…TTGAMIRTGK (164 aa)) enclose the SIS domain. Catalysis depends on Glu85, which acts as the Proton donor. Residue Glu116 is part of the active site.

The protein belongs to the GCKR-like family. MurNAc-6-P etherase subfamily. As to quaternary structure, homodimer.

The catalysed reaction is N-acetyl-D-muramate 6-phosphate + H2O = N-acetyl-D-glucosamine 6-phosphate + (R)-lactate. Its pathway is amino-sugar metabolism; 1,6-anhydro-N-acetylmuramate degradation. The protein operates within amino-sugar metabolism; N-acetylmuramate degradation. It functions in the pathway cell wall biogenesis; peptidoglycan recycling. Its function is as follows. Specifically catalyzes the cleavage of the D-lactyl ether substituent of MurNAc 6-phosphate, producing GlcNAc 6-phosphate and D-lactate. Together with AnmK, is also required for the utilization of anhydro-N-acetylmuramic acid (anhMurNAc) either imported from the medium or derived from its own cell wall murein, and thus plays a role in cell wall recycling. The polypeptide is N-acetylmuramic acid 6-phosphate etherase (Photorhabdus laumondii subsp. laumondii (strain DSM 15139 / CIP 105565 / TT01) (Photorhabdus luminescens subsp. laumondii)).